The chain runs to 45 residues: Large ribosomal subunit protein bL34 (45 aa).

Residues 1–20 (MSKRTYQPNKRKRLKTHGFR) are compositionally biased toward basic residues. Residues 1–45 (MSKRTYQPNKRKRLKTHGFRSRMSTASGRRIISCRRRKNRETLTA) form a disordered region.

It belongs to the bacterial ribosomal protein bL34 family.

The sequence is that of Large ribosomal subunit protein bL34 from Tropheryma whipplei (strain Twist) (Whipple's bacillus).